The following is a 110-amino-acid chain: UPF0060 membrane protein ASA_2267 (110 aa).

4 helical membrane passes run 7-27, 33-53, 63-83, and 87-107; these read IGLF…PYLW, SVWL…LLSL, AAYG…VDGI, and LWDL…MFAP.

It belongs to the UPF0060 family.

The protein resides in the cell inner membrane. The polypeptide is UPF0060 membrane protein ASA_2267 (Aeromonas salmonicida (strain A449)).